Here is an 87-residue protein sequence, read N- to C-terminus: Sec-independent protein translocase protein TatA (87 aa).

A helical transmembrane segment spans residues Met-1–Gly-21. Residues Val-56 to Val-87 are disordered. Residues Asn-64–Asn-79 are compositionally biased toward polar residues.

Belongs to the TatA/E family. As to quaternary structure, the Tat system comprises two distinct complexes: a TatABC complex, containing multiple copies of TatA, TatB and TatC subunits, and a separate TatA complex, containing only TatA subunits. Substrates initially bind to the TatABC complex, which probably triggers association of the separate TatA complex to form the active translocon.

Its subcellular location is the cell inner membrane. Part of the twin-arginine translocation (Tat) system that transports large folded proteins containing a characteristic twin-arginine motif in their signal peptide across membranes. TatA could form the protein-conducting channel of the Tat system. This is Sec-independent protein translocase protein TatA from Psychrobacter arcticus (strain DSM 17307 / VKM B-2377 / 273-4).